The sequence spans 208 residues: ATP-dependent Clp protease proteolytic subunit (208 aa).

The active-site Nucleophile is Ser-105. The active site involves His-130.

It belongs to the peptidase S14 family. In terms of assembly, fourteen ClpP subunits assemble into 2 heptameric rings which stack back to back to give a disk-like structure with a central cavity, resembling the structure of eukaryotic proteasomes.

The protein localises to the cytoplasm. It carries out the reaction Hydrolysis of proteins to small peptides in the presence of ATP and magnesium. alpha-casein is the usual test substrate. In the absence of ATP, only oligopeptides shorter than five residues are hydrolyzed (such as succinyl-Leu-Tyr-|-NHMec, and Leu-Tyr-Leu-|-Tyr-Trp, in which cleavage of the -Tyr-|-Leu- and -Tyr-|-Trp bonds also occurs).. Its function is as follows. Cleaves peptides in various proteins in a process that requires ATP hydrolysis. Has a chymotrypsin-like activity. Plays a major role in the degradation of misfolded proteins. The protein is ATP-dependent Clp protease proteolytic subunit of Xylella fastidiosa (strain M23).